The following is a 309-amino-acid chain: Taste receptor type 2 member 20 (309 aa).

Over 1–6 the chain is Extracellular; sequence MMSFLH. Residues 7–27 form a helical membrane-spanning segment; sequence IVFSILVVVAFILGNFANGFI. Topologically, residues 28–46 are cytoplasmic; the sequence is ALINFIAWVKRQKISSADQ. The chain crosses the membrane as a helical span at residues 47–67; sequence IIAALAVSRVGLLWVILLHWY. The Extracellular segment spans residues 68–79; the sequence is STVLNPTSSNLK. Residues 80-100 form a helical membrane-spanning segment; that stretch reads VIIFISNAWAVTNHFSIWLAT. At 101 to 125 the chain is on the cytoplasmic side; it reads SLSIFYLLKIVNFSRLIFHHLKRKA. A helical transmembrane segment spans residues 126-146; it reads KSVVLVIVLGSLFFLVCHLVM. The Extracellular portion of the chain corresponds to 147 to 178; the sequence is KHTYINVWTEECEGNVTWKIKLRNAMHLSNLT. N-linked (GlcNAc...) asparagine glycosylation is found at N161 and N176. Residues 179 to 199 form a helical membrane-spanning segment; the sequence is VAMLANLIPFTLTLISFLLLI. The Cytoplasmic portion of the chain corresponds to 200–229; sequence YSLCKHLKKMQLHGKGSQDPSTKIHIKALQ. A helical transmembrane segment spans residues 230 to 250; that stretch reads TVTSFLILLAIYFLCLIISFW. Residues 251–259 are Extracellular-facing; that stretch reads NFKMRPKEI. The chain crosses the membrane as a helical span at residues 260–280; that stretch reads VLMLCQAFGIIYPSFHSFILI. Over 281–309 the chain is Cytoplasmic; sequence WGNKTLKQTFLSVLWQVTCWAKGQNQSTP.

This sequence belongs to the G-protein coupled receptor T2R family. Expressed in subsets of taste receptor cells of the tongue and exclusively in gustducin-positive cells.

It is found in the membrane. Receptor that may play a role in the perception of bitterness and is gustducin-linked. May play a role in sensing the chemical composition of the gastrointestinal content. The activity of this receptor may stimulate alpha gustducin, mediate PLC-beta-2 activation and lead to the gating of TRPM5. This Homo sapiens (Human) protein is Taste receptor type 2 member 20 (TAS2R20).